Consider the following 137-residue polypeptide: Large ribosomal subunit protein uL16 (137 aa).

This sequence belongs to the universal ribosomal protein uL16 family. In terms of assembly, part of the 50S ribosomal subunit.

In terms of biological role, binds 23S rRNA and is also seen to make contacts with the A and possibly P site tRNAs. The chain is Large ribosomal subunit protein uL16 from Solidesulfovibrio magneticus (strain ATCC 700980 / DSM 13731 / RS-1) (Desulfovibrio magneticus).